The following is a 223-amino-acid chain: Ribosomal RNA small subunit methyltransferase G (223 aa).

3 residues coordinate S-adenosyl-L-methionine: G85, F90, and R154.

The protein belongs to the methyltransferase superfamily. RNA methyltransferase RsmG family.

Its subcellular location is the cytoplasm. It catalyses the reaction guanosine(527) in 16S rRNA + S-adenosyl-L-methionine = N(7)-methylguanosine(527) in 16S rRNA + S-adenosyl-L-homocysteine. Its function is as follows. Specifically methylates the N7 position of guanine in position 527 of 16S rRNA. The chain is Ribosomal RNA small subunit methyltransferase G from Rhodopseudomonas palustris (strain ATCC BAA-98 / CGA009).